The following is a 119-amino-acid chain: Basic phospholipase A2 notexin (119 aa).

7 disulfides stabilise this stretch: Cys11/Cys71, Cys27/Cys118, Cys29/Cys45, Cys44/Cys99, Cys51/Cys92, Cys60/Cys85, and Cys78/Cys90. Positions 28, 30, and 32 each coordinate Ca(2+). Residue His48 is part of the active site. Residue Asp49 coordinates Ca(2+). Residue Asp93 is part of the active site.

Belongs to the phospholipase A2 family. Group I subfamily. D49 sub-subfamily. Monomer. Ca(2+) is required as a cofactor. Expressed by the venom gland.

It localises to the secreted. It carries out the reaction a 1,2-diacyl-sn-glycero-3-phosphocholine + H2O = a 1-acyl-sn-glycero-3-phosphocholine + a fatty acid + H(+). In terms of biological role, snake venom phospholipase A2 (PLA2) that inhibits neuromuscular transmission by blocking acetylcholine release from the nerve termini. Is directly toxic to skeletal muscle upon local application in vivo (dystrophic effect). Also has direct nephrotoxicity in experimental mice; a single subcutaneous dose (1.38 ug/kg) produces renal tubular and glomerular damage within 24 hours. PLA2 catalyzes the calcium-dependent hydrolysis of the 2-acyl groups in 3-sn-phosphoglycerides. The protein is Basic phospholipase A2 notexin of Notechis scutatus scutatus (Mainland tiger snake).